Reading from the N-terminus, the 1188-residue chain is DNA-directed RNA polymerase subunit beta (1188 aa).

This sequence belongs to the RNA polymerase beta chain family. As to quaternary structure, the RNAP catalytic core consists of 2 alpha, 1 beta, 1 beta' and 1 omega subunit. When a sigma factor is associated with the core the holoenzyme is formed, which can initiate transcription.

It catalyses the reaction RNA(n) + a ribonucleoside 5'-triphosphate = RNA(n+1) + diphosphate. Its function is as follows. DNA-dependent RNA polymerase catalyzes the transcription of DNA into RNA using the four ribonucleoside triphosphates as substrates. The polypeptide is DNA-directed RNA polymerase subunit beta (Streptococcus equi subsp. zooepidemicus (strain H70)).